The primary structure comprises 199 residues: GTP cyclohydrolase-2 (199 aa).

52-56 (RMHSE) lines the GTP pocket. Zn(2+) contacts are provided by cysteine 57, cysteine 68, and cysteine 70. Residues glutamine 73, 94-96 (EGR), and threonine 116 each bind GTP. Aspartate 128 functions as the Proton acceptor in the catalytic mechanism. Catalysis depends on arginine 130, which acts as the Nucleophile. Residues threonine 151 and lysine 156 each contribute to the GTP site.

The protein belongs to the GTP cyclohydrolase II family. Zn(2+) serves as cofactor.

The catalysed reaction is GTP + 4 H2O = 2,5-diamino-6-hydroxy-4-(5-phosphoribosylamino)-pyrimidine + formate + 2 phosphate + 3 H(+). It functions in the pathway cofactor biosynthesis; riboflavin biosynthesis; 5-amino-6-(D-ribitylamino)uracil from GTP: step 1/4. Functionally, catalyzes the conversion of GTP to 2,5-diamino-6-ribosylamino-4(3H)-pyrimidinone 5'-phosphate (DARP), formate and pyrophosphate. This chain is GTP cyclohydrolase-2, found in Aliivibrio salmonicida (strain LFI1238) (Vibrio salmonicida (strain LFI1238)).